The following is a 168-amino-acid chain: Chemoreceptor glutamine deamidase CheD (168 aa).

The protein belongs to the CheD family. Forms a complex with CheC.

It carries out the reaction L-glutaminyl-[protein] + H2O = L-glutamyl-[protein] + NH4(+). In terms of biological role, deamidates glutamine residues to glutamate on methyl-accepting chemotaxis receptors (MCPs). CheD-mediated MCP deamidation is required for productive communication of the conformational signals of the chemoreceptors to the CheA kinase. The chain is Chemoreceptor glutamine deamidase CheD from Bacillus licheniformis (strain ATCC 14580 / DSM 13 / JCM 2505 / CCUG 7422 / NBRC 12200 / NCIMB 9375 / NCTC 10341 / NRRL NRS-1264 / Gibson 46).